A 68-amino-acid polypeptide reads, in one-letter code: Conotoxin Em11.5 (68 aa).

An N-terminal signal peptide occupies residues 1–26; the sequence is MMFRLTSVGCFLLVIACLNLFQVVLT. 4 disulfides stabilise this stretch: Cys-29–Cys-43, Cys-36–Cys-48, Cys-42–Cys-52, and Cys-47–Cys-56. Position 60 is a phenylalanine amide (Phe-60). A propeptide spanning residues 64–68 is cleaved from the precursor; it reads ATFQE.

The protein belongs to the conotoxin I2 superfamily. Expressed by the venom duct.

It is found in the secreted. The sequence is that of Conotoxin Em11.5 from Conus emaciatus (False virgin cone).